Reading from the N-terminus, the 334-residue chain is N-acetyl-gamma-glutamyl-phosphate reductase (334 aa).

Residue Cys154 is part of the active site.

The protein belongs to the NAGSA dehydrogenase family. Type 1 subfamily.

The protein localises to the cytoplasm. The enzyme catalyses N-acetyl-L-glutamate 5-semialdehyde + phosphate + NADP(+) = N-acetyl-L-glutamyl 5-phosphate + NADPH + H(+). The protein operates within amino-acid biosynthesis; L-arginine biosynthesis; N(2)-acetyl-L-ornithine from L-glutamate: step 3/4. Its function is as follows. Catalyzes the NADPH-dependent reduction of N-acetyl-5-glutamyl phosphate to yield N-acetyl-L-glutamate 5-semialdehyde. The protein is N-acetyl-gamma-glutamyl-phosphate reductase of Escherichia coli O157:H7.